A 483-amino-acid chain; its full sequence is Aspartyl/glutamyl-tRNA(Asn/Gln) amidotransferase subunit B (483 aa).

It belongs to the GatB/GatE family. GatB subfamily. Heterotrimer of A, B and C subunits.

The enzyme catalyses L-glutamyl-tRNA(Gln) + L-glutamine + ATP + H2O = L-glutaminyl-tRNA(Gln) + L-glutamate + ADP + phosphate + H(+). It carries out the reaction L-aspartyl-tRNA(Asn) + L-glutamine + ATP + H2O = L-asparaginyl-tRNA(Asn) + L-glutamate + ADP + phosphate + 2 H(+). Allows the formation of correctly charged Asn-tRNA(Asn) or Gln-tRNA(Gln) through the transamidation of misacylated Asp-tRNA(Asn) or Glu-tRNA(Gln) in organisms which lack either or both of asparaginyl-tRNA or glutaminyl-tRNA synthetases. The reaction takes place in the presence of glutamine and ATP through an activated phospho-Asp-tRNA(Asn) or phospho-Glu-tRNA(Gln). The sequence is that of Aspartyl/glutamyl-tRNA(Asn/Gln) amidotransferase subunit B from Marinobacter nauticus (strain ATCC 700491 / DSM 11845 / VT8) (Marinobacter aquaeolei).